The sequence spans 115 residues: Large ribosomal subunit protein bL31B (115 aa).

It belongs to the bacterial ribosomal protein bL31 family. Type B subfamily. As to quaternary structure, part of the 50S ribosomal subunit.

The protein is Large ribosomal subunit protein bL31B of Polynucleobacter necessarius subsp. necessarius (strain STIR1).